A 518-amino-acid chain; its full sequence is Membrane-bound lytic murein transglycosylase F (518 aa).

Residues 1–21 (MKKLKINYLFIGILALLLAVA) form the signal peptide. The non-LT domain stretch occupies residues 22 to 269 (LWPSIPWFGK…RIEEKYLGHG (248 aa)). The interval 270–518 (DDFDYVDTRT…SRKGSEEKQN (249 aa)) is LT domain. Glutamate 314 is a catalytic residue.

This sequence in the N-terminal section; belongs to the bacterial solute-binding protein 3 family. In the C-terminal section; belongs to the transglycosylase Slt family.

It is found in the cell outer membrane. The catalysed reaction is Exolytic cleavage of the (1-&gt;4)-beta-glycosidic linkage between N-acetylmuramic acid (MurNAc) and N-acetylglucosamine (GlcNAc) residues in peptidoglycan, from either the reducing or the non-reducing ends of the peptidoglycan chains, with concomitant formation of a 1,6-anhydrobond in the MurNAc residue.. Murein-degrading enzyme that degrades murein glycan strands and insoluble, high-molecular weight murein sacculi, with the concomitant formation of a 1,6-anhydromuramoyl product. Lytic transglycosylases (LTs) play an integral role in the metabolism of the peptidoglycan (PG) sacculus. Their lytic action creates space within the PG sacculus to allow for its expansion as well as for the insertion of various structures such as secretion systems and flagella. This Shigella boydii serotype 18 (strain CDC 3083-94 / BS512) protein is Membrane-bound lytic murein transglycosylase F.